Reading from the N-terminus, the 460-residue chain is Heme sensor protein HssS (460 aa).

The next 2 membrane-spanning stretches (helical) occupy residues 11 to 31 (IYTI…TNII) and 164 to 184 (IFLA…VISS). The HAMP domain maps to 186 to 238 (YAIIKPIQQLKRATERLMHGNFDEVIHVTRKDEFGTLQYRFDKMRLSLKQLDD). The region spanning 246–456 (NVSHEIKTPL…TFTITFKKVP (211 aa)) is the Histidine kinase domain. Histidine 249 bears the Phosphohistidine; by autocatalysis mark.

Post-translationally, autophosphorylated.

The protein resides in the cell membrane. The enzyme catalyses ATP + protein L-histidine = ADP + protein N-phospho-L-histidine.. Member of the two-component regulatory system HssS/HssR involved in intracellular heme homeostasis and tempering of staphylococcal virulence. HssS functions as a heme sensor histidine kinase which is autophosphorylated at a histidine residue and transfers its phosphate group to an aspartate residue of HssR. HssR/HssS activates the expression of hrtAB, an efflux pump, in response to extracellular heme, hemin, hemoglobin or blood. This chain is Heme sensor protein HssS (hssS), found in Staphylococcus saprophyticus subsp. saprophyticus (strain ATCC 15305 / DSM 20229 / NCIMB 8711 / NCTC 7292 / S-41).